The sequence spans 463 residues: Putative F-box protein At3g29830 (463 aa).

Positions 7-55 (RDRISSLPDVVLVMILSFLSFKDNVKTSILSKRWRNICYEAKNISFKES) constitute an F-box domain.

This chain is Putative F-box protein At3g29830, found in Arabidopsis thaliana (Mouse-ear cress).